Consider the following 427-residue polypeptide: Adenylosuccinate synthetase (427 aa).

GTP is bound by residues 12 to 18 (GDEGKGK) and 40 to 42 (GHT). Aspartate 13 acts as the Proton acceptor in catalysis. Mg(2+) is bound by residues aspartate 13 and glycine 40. IMP is bound by residues 13–16 (DEGK), 38–41 (NAGH), threonine 128, arginine 142, glutamine 223, threonine 238, and arginine 302. Histidine 41 serves as the catalytic Proton donor. 298-304 (TTTGRPR) contributes to the substrate binding site. GTP contacts are provided by residues arginine 304, 330 to 332 (KLD), and 412 to 414 (GVG).

The protein belongs to the adenylosuccinate synthetase family. In terms of assembly, homodimer. The cofactor is Mg(2+).

The protein localises to the cytoplasm. It carries out the reaction IMP + L-aspartate + GTP = N(6)-(1,2-dicarboxyethyl)-AMP + GDP + phosphate + 2 H(+). It functions in the pathway purine metabolism; AMP biosynthesis via de novo pathway; AMP from IMP: step 1/2. Its function is as follows. Plays an important role in the de novo pathway of purine nucleotide biosynthesis. Catalyzes the first committed step in the biosynthesis of AMP from IMP. This is Adenylosuccinate synthetase from Pelotomaculum thermopropionicum (strain DSM 13744 / JCM 10971 / SI).